We begin with the raw amino-acid sequence, 342 residues long: Fructose-1,6-bisphosphatase class 1 (342 aa).

Mg(2+) contacts are provided by Glu97, Asp119, Leu121, and Asp122. Residues 122–125 (DGSS), Asn215, Tyr247, and Lys280 each bind substrate. Residue Glu286 coordinates Mg(2+).

It belongs to the FBPase class 1 family. In terms of assembly, homotetramer. The cofactor is Mg(2+).

It localises to the cytoplasm. It carries out the reaction beta-D-fructose 1,6-bisphosphate + H2O = beta-D-fructose 6-phosphate + phosphate. Its pathway is carbohydrate biosynthesis; gluconeogenesis. The protein is Fructose-1,6-bisphosphatase class 1 of Leptospira borgpetersenii serovar Hardjo-bovis (strain JB197).